Consider the following 235-residue polypeptide: Claudin-15 (235 aa).

Position 1 (methionine 1) is a topological domain, cytoplasmic. The chain crosses the membrane as a helical span at residues 2 to 24 (LVAVEIFGFFLTAVGLLMLGVTL). The Extracellular portion of the chain corresponds to 25–74 (AHSSWRVSTVHGNVITTNTIFENLWYSCATDSMGVHNCWEFPSMLALSGY). A disulfide bond links cysteine 52 and cysteine 62. A helical membrane pass occupies residues 75–99 (IQACRALMITAILLGFLGLFLGMVG). At 100–115 (LRCTNIGGLELSRKTK) the chain is on the cytoplasmic side. Residue serine 111 is modified to Phosphoserine. Residues 116–140 (LAATAGALHILAGICGMVAVSWYAF) traverse the membrane as a helical segment. At 141 to 159 (NITRDFFNPLYAGTKYELG) the chain is on the extracellular side. The interval 146–147 (FF) is important for the formation of tight-junction strand-like structures. A helical membrane pass occupies residues 160-182 (PALYLGWSACLLAILGGICLFSN). The Cytoplasmic segment spans residues 183-235 (CCCSRDRDPATGVQLPYKAPVIPAASLAARLPAAASDEEGDSSFGKYGKNAYV). 2 positions are modified to phosphoserine: serine 218 and serine 225.

Belongs to the claudin family. As to quaternary structure, can form homo- and heteropolymeric tight junction strands. In terms of processing, palmitoylated.

The protein localises to the cell junction. It is found in the tight junction. The protein resides in the cell membrane. The enzyme catalyses Na(+)(in) = Na(+)(out). The catalysed reaction is K(+)(in) = K(+)(out). It catalyses the reaction Cs(+)(in) = Cs(+)(out). It carries out the reaction Rb(+)(in) = Rb(+)(out). The enzyme catalyses Li(+)(in) = Li(+)(out). The catalysed reaction is NH4(+)(in) = NH4(+)(out). It catalyses the reaction methylamine(out) = methylamine(in). It carries out the reaction H2O(in) = H2O(out). Functionally, forms paracellular channels: polymerizes in tight junction strands with cation- and water-selective channels through the strands, conveying epithelial permeability in a process known as paracellular tight junction permeability. In intestinal epithelium, allows for sodium and water fluxes from the peritoneal side to the lumen of the intestine to regulate nutrient absorption and intestinal morphogenesis. This Bos taurus (Bovine) protein is Claudin-15 (CLDN15).